The following is a 301-amino-acid chain: Hydroxyquinol 1,2-dioxygenase (301 aa).

4 residues coordinate Fe cation: Y169, Y202, H226, and H228.

The protein belongs to the intradiol ring-cleavage dioxygenase family. The cofactor is Fe(3+).

The catalysed reaction is benzene-1,2,4-triol + O2 = maleylacetate + 2 H(+). It participates in aromatic compound metabolism. Its function is as follows. Involved in resorcinol degradation. Catalyzes the conversion of hydroxyquinol to malelylacetate. Also shows weak activity with catechol, 3-methylcatechol and 4-methylcatechol, but cannot use 4-chlorocatechol, 4-nitrocatechol or protocatechuate. In Corynebacterium glutamicum (strain ATCC 13032 / DSM 20300 / JCM 1318 / BCRC 11384 / CCUG 27702 / LMG 3730 / NBRC 12168 / NCIMB 10025 / NRRL B-2784 / 534), this protein is Hydroxyquinol 1,2-dioxygenase.